The primary structure comprises 132 residues: Anti-sigma-E factor RseA (132 aa).

T36 bears the Phosphothreonine; by PknB mark. Residues H63, C67, and C70 each coordinate Zn(2+). The tract at residues 106-132 is disordered; that stretch reads RTPEVTPDVSEQAKFADDPTRGRRKRR.

The protein belongs to the zinc-associated anti-sigma factor (ZAS) superfamily. Interacts with ECF RNA polymerase sigma factor SigE, interaction is abrogated by treatment of cells with H(2)O(2), detergent or vancomycin (the latter 2 cause surface stress). This probably inhibits the interaction of SigE with the RNA polymerase catalytic core. The cofactor is Zn(2+). Phosphorylated by PknB on Thr-36; can be dephosphorylated (at least in vitro) by PstP. Phosphorylation is the signal for subsequent degradation by the ClpC1-ClpP2 complex. Post-translationally, degraded following vancomycin treatment (surface stress) by a ClpC1-ClpP2 complex.

It is found in the cytoplasm. Its function is as follows. An anti-sigma factor for extracytoplasmic function (ECF) sigma factor SigE. ECF sigma factors are held in an inactive form by an anti-sigma factor. The polypeptide is Anti-sigma-E factor RseA (rseA) (Mycolicibacterium smegmatis (strain ATCC 700084 / mc(2)155) (Mycobacterium smegmatis)).